The chain runs to 606 residues: Maternal effect protein oskar (606 aa).

The HTH OST-type domain maps to 152-221; that stretch reads EYPDIDSEVR…SGKRIFNLKA (70 aa). Ser-270 and Ser-275 each carry phosphoserine. The segment at 425-439 is leucine-zipper; sequence LMGDDFMLYLARMEL.

As to quaternary structure, interacts with smaug (smg). Interacts with yl/yolkless. In terms of tissue distribution, begins to accumulate at the posterior pole of the oocyte from stage 8 onwards.

Its subcellular location is the endosome. Its function is as follows. Organizes the germ plasm and directs localization of the posterior determinant nanos. Oskar protein is required to keep nanos (nos) RNA and staufen protein at the posterior pole. The sequence is that of Maternal effect protein oskar (osk) from Drosophila melanogaster (Fruit fly).